The chain runs to 439 residues: Ribosomal protein uS12 methylthiotransferase RimO (439 aa).

An MTTase N-terminal domain is found at 7 to 119 (KQLCLISLGC…IDIMIAKKQN (113 aa)). [4Fe-4S] cluster is bound by residues Cys-16, Cys-50, Cys-82, Cys-151, Cys-155, and Cys-158. Residues 137–368 (TGSSVHAYVK…ALKHQNHSFK (232 aa)) form the Radical SAM core domain.

Belongs to the methylthiotransferase family. RimO subfamily. Requires [4Fe-4S] cluster as cofactor.

It localises to the cytoplasm. The enzyme catalyses L-aspartate(89)-[ribosomal protein uS12]-hydrogen + (sulfur carrier)-SH + AH2 + 2 S-adenosyl-L-methionine = 3-methylsulfanyl-L-aspartate(89)-[ribosomal protein uS12]-hydrogen + (sulfur carrier)-H + 5'-deoxyadenosine + L-methionine + A + S-adenosyl-L-homocysteine + 2 H(+). In terms of biological role, catalyzes the methylthiolation of an aspartic acid residue of ribosomal protein uS12. The sequence is that of Ribosomal protein uS12 methylthiotransferase RimO from Helicobacter pylori (strain G27).